The chain runs to 110 residues: UPF0132 membrane protein MJ1443 (110 aa).

3 consecutive transmembrane segments (helical) span residues isoleucine 15–glutamate 35, isoleucine 49–tryptophan 69, and methionine 70–alanine 90.

It belongs to the UPF0132 family.

It localises to the cell membrane. In Methanocaldococcus jannaschii (strain ATCC 43067 / DSM 2661 / JAL-1 / JCM 10045 / NBRC 100440) (Methanococcus jannaschii), this protein is UPF0132 membrane protein MJ1443.